Consider the following 215-residue polypeptide: MNIILMGLPGAGKGTQASEIVKKFPIPHISTGDMFRKAIKEETELGKEAKSYMDRGELVPDEVTVGIVKERISEDDAKKGFLLDGFPRTIEQAEALNNIMSELDRNIDAVINIEVPEEELMNRLTGRRICESCGTTYHLVFNPPKVEGICDIDGGKLYQREDDNPETVANRLSVNIKQSKPILDFYDQKGVLKNIDGSKDISDVTKDVIDILDHL.

10 to 15 (GAGKGT) provides a ligand contact to ATP. Residues 30 to 59 (STGDMFRKAIKEETELGKEAKSYMDRGELV) form an NMP region. AMP-binding positions include Thr-31, Arg-36, 57-59 (ELV), 85-88 (GFPR), and Gln-92. The LID stretch occupies residues 126 to 163 (GRRICESCGTTYHLVFNPPKVEGICDIDGGKLYQREDD). Position 127 (Arg-127) interacts with ATP. Zn(2+) contacts are provided by Cys-130 and Cys-133. 136–137 (TY) is a binding site for ATP. Positions 150 and 153 each coordinate Zn(2+). AMP contacts are provided by Arg-160 and Arg-171. Lys-199 is a binding site for ATP.

This sequence belongs to the adenylate kinase family. Monomer.

The protein localises to the cytoplasm. The enzyme catalyses AMP + ATP = 2 ADP. It participates in purine metabolism; AMP biosynthesis via salvage pathway; AMP from ADP: step 1/1. In terms of biological role, catalyzes the reversible transfer of the terminal phosphate group between ATP and AMP. Plays an important role in cellular energy homeostasis and in adenine nucleotide metabolism. The chain is Adenylate kinase from Staphylococcus aureus (strain COL).